Here is a 1008-residue protein sequence, read N- to C-terminus: MNSQQFPRQAASMPSPQVSNSGASVGQNVQGQGDEVARDMDVQSRDLLGAGTVLPSRDDKQEPVVVRPYPQVQMFTSHHPLQPAPSLTMTAQPAHLTSAVPLSFSENILKQTSKSTMPSRPIAPAPPSAMSAVPKVSGQGTVTMESGLPQTSAIPVATISGQQGHPNSLHHIMAATNVHMSIIRSSAPGPPLHIGASHLPRGAAAAAVMSSSKVTTMLRPASAQIPSAAAAQSATQHIIHPPIQSRPPVTTTSLTPAVVATVSATRAQSPVITTTPAHAAEPVLRPTLSIQQHPPPSAISIQRSAQARDAATTRITLPTHPALGVQKPQLHAMTQKTLFGTGNPVAAATVAPILATNTLPSVTTSGSAPHTQVPTSTIVSMTMPTHSSHATAVTASNIPVAKVVPQQITHTSPRIQSDYGTERGNLIPIPGHRASPNPMTMEARSENRQPVPVQLQYFLPTYPPSAYPLAAHTYTPITSSVSTIRQYPVSAQAPNSAITAQSVASTVHLNQMQLINMDTSHARHIQGIQPAPVSAQGIQQSPFSAQGIQATPISTQGIQPTQMNTQAIHPATSITNQGVQTSSVSSQQASSEPKASVVLAEGATIVANPINGAFNATPGGTTVMQSHSQSPGIGSSPAQGSSPRPSILRKKPATDGTKPKADLHAAVAPGVTGDPGIADQPSAAASLPSSHHPAAAVPSPPSQPASGSMPSSIHITPATIPALSAPPPLLSNAPSGAVMPEAKVKEEAEPMDISRPVSVPLLPPNSISSPLTVLANNISIPVGELLPGASPRKKPRKQQHVISTEEGDMMETNSTDEERCHAVKPLTSRPEKRKSPPKEYIDEEGVRYVPVRPRPPITLLRHYRNPWKAAYHHFQRYSDVRVKEEKKLTLQEVANQKGITCRVQGWKTHLCAAQLLQLIKLEQDVFERLTVLQEGLVPKKKTATDDDLHRINELIQGNMQRCKLVMDQITESRDCMLKVLDHKDRVLKLLNKSGASRRLSKVKQKDKM.

Residues 1-31 (MNSQQFPRQAASMPSPQVSNSGASVGQNVQG) show a composition bias toward polar residues. Disordered stretches follow at residues 1–44 (MNSQ…DVQS), 113–134 (SKST…SAVP), 415–435 (IQSD…HRAS), and 617–720 (TPGG…PATI). Over residues 35–44 (EVARDMDVQS) the composition is skewed to basic and acidic residues. Over residues 618-644 (PGGTTVMQSHSQSPGIGSSPAQGSSPR) the composition is skewed to polar residues. Residues 678 to 697 (ADQPSAAASLPSSHHPAAAV) are compositionally biased toward low complexity.

The protein belongs to the SAP130 family.

It is found in the nucleus. Acts as a transcriptional repressor. This is Histone deacetylase complex subunit SAP130-A (sap130-a) from Xenopus laevis (African clawed frog).